A 66-amino-acid chain; its full sequence is MKAKEIRDLTTAEIEQKIKSLKEELFNLRFQLATGQLENTARIRQVRKDIARMKTIIRERELAANK.

Belongs to the universal ribosomal protein uL29 family.

This is Large ribosomal subunit protein uL29 from Geobacillus thermodenitrificans (strain NG80-2).